The chain runs to 296 residues: Origin of replication complex subunit 6 (296 aa).

The disordered stretch occupies residues 212 to 296 (PSKRKHDDDS…MALEVSSAAN (85 aa)). Over residues 220–236 (DSDSSGESSGDDQDELD) the composition is skewed to acidic residues. The segment covering 254–264 (WKSSVLSSNKQ) has biased composition (polar residues).

Belongs to the ORC6 family. In terms of assembly, component of the origin recognition complex (ORC) composed of at least ORC1, ORC2, ORC3, ORC4, ORC5 and ORC6. ORC is regulated in a cell-cycle and development dependent manner. It is sequentially assembled at the exit from anaphase of mitosis and disassembled as cells enter S phase.

The protein localises to the nucleus. In terms of biological role, component of the origin recognition complex (ORC) that binds origins of replication. DNA-binding is ATP-dependent. The specific DNA sequences that define origins of replication have not been identified yet. ORC is required to assemble the pre-replication complex necessary to initiate DNA replication. This Oryza sativa subsp. indica (Rice) protein is Origin of replication complex subunit 6.